A 395-amino-acid polypeptide reads, in one-letter code: MWGLCKNHFPSNKIQVQERNKALKPKKSGSEHKTKQLFPVFNCKKKEKGVMIRFAILRNANTSLLSARSICLFTQAPTYCHVRLNTLNKSITTKRNSLTESKRHVHDGKHFFTTPHQQQQTKLGEIEEGHSPNIKGEDLRSIGQAITHQRNKRRKQIWSAIFGGIFGVILGYSLIYRVIYLKEQSFLPLFPSSKIRKLSTRDLKKVDVNQVQKLSKLRVLEILSGHDMIKEQYGVPLLDKDGNSPTLNEFSMWCEDQDPCVTGIVMEPDDKRDSSHTWYRIPFVCKWRITHRPISIRGTIDDLLNRIGLETADLFEIISPERVYGSFKYEYPLQGDSHALHLWFHGEIELDDDSLIVYNGKYHVDVKLQEIDLFRREKNGQLVQYVLYKNEAGDK.

Residues 156–176 (QIWSAIFGGIFGVILGYSLIY) form a helical membrane-spanning segment.

The protein belongs to the AIM39 family.

The protein resides in the mitochondrion membrane. The sequence is that of Altered inheritance of mitochondria protein 39, mitochondrial (AIM39) from Saccharomyces cerevisiae (strain Lalvin EC1118 / Prise de mousse) (Baker's yeast).